Here is a 942-residue protein sequence, read N- to C-terminus: Isoleucine--tRNA ligase (942 aa).

A 'HIGH' region motif is present at residues 58–68 (PYANGDIHIGH). Glutamate 566 lines the L-isoleucyl-5'-AMP pocket. The 'KMSKS' region signature appears at 607 to 611 (KMSKS). Lysine 610 provides a ligand contact to ATP. Cysteine 905, cysteine 908, cysteine 925, and cysteine 928 together coordinate Zn(2+).

Belongs to the class-I aminoacyl-tRNA synthetase family. IleS type 1 subfamily. As to quaternary structure, monomer. Zn(2+) serves as cofactor.

Its subcellular location is the cytoplasm. It catalyses the reaction tRNA(Ile) + L-isoleucine + ATP = L-isoleucyl-tRNA(Ile) + AMP + diphosphate. Catalyzes the attachment of isoleucine to tRNA(Ile). As IleRS can inadvertently accommodate and process structurally similar amino acids such as valine, to avoid such errors it has two additional distinct tRNA(Ile)-dependent editing activities. One activity is designated as 'pretransfer' editing and involves the hydrolysis of activated Val-AMP. The other activity is designated 'posttransfer' editing and involves deacylation of mischarged Val-tRNA(Ile). The chain is Isoleucine--tRNA ligase from Pseudoalteromonas atlantica (strain T6c / ATCC BAA-1087).